Here is a 294-residue protein sequence, read N- to C-terminus: Phosphatidylglycerol--prolipoprotein diacylglyceryl transferase (294 aa).

The next 7 membrane-spanning stretches (helical) occupy residues 10–30 (VALALGPIEIHWYGLMYLLAF), 55–75 (LVFYGALGVILGGRIGYVLFY), 91–111 (WEGGMSFHGGFIGVMLGMWFF), 119–139 (AFQVFDFIVPCVPTGLLFGRI), 196–216 (PSQLYEAFAEGLLLFIFLWWY), 224–244 (MAASAVFLLGYGISRFIIEFF), and 258–278 (WMTKGQLLSAPMIIAGLIMLI). Position 138 (Arg-138) interacts with a 1,2-diacyl-sn-glycero-3-phospho-(1'-sn-glycerol).

It belongs to the Lgt family.

The protein localises to the cell inner membrane. The enzyme catalyses L-cysteinyl-[prolipoprotein] + a 1,2-diacyl-sn-glycero-3-phospho-(1'-sn-glycerol) = an S-1,2-diacyl-sn-glyceryl-L-cysteinyl-[prolipoprotein] + sn-glycerol 1-phosphate + H(+). Its pathway is protein modification; lipoprotein biosynthesis (diacylglyceryl transfer). In terms of biological role, catalyzes the transfer of the diacylglyceryl group from phosphatidylglycerol to the sulfhydryl group of the N-terminal cysteine of a prolipoprotein, the first step in the formation of mature lipoproteins. The protein is Phosphatidylglycerol--prolipoprotein diacylglyceryl transferase of Psychrobacter arcticus (strain DSM 17307 / VKM B-2377 / 273-4).